The chain runs to 683 residues: E3 ubiquitin-protein ligase RNF103 (683 aa).

Helical transmembrane passes span 6–26 (FFLLLYFLVLFVLARFFEAIV), 326–346 (LFVLSLVLVNLMAWMDLFITQ), 366–386 (LLIISWLPVLGFLQLPYLDSF), and 411–431 (MFYTSHPALFLSTYLGHGLLI). Residues 525–542 (EEMSESSQDTENDSDSDN) are compositionally biased toward acidic residues. The tract at residues 525–548 (EEMSESSQDTENDSDSDNMDTFSS) is disordered. Residues 619–661 (CVVCLENFENGCLLMGLPCGHVFHQNCIVMWLAGGRHCCPVCR) form an RING-type zinc finger.

In terms of assembly, interacts with DERL1 and VCP. In terms of tissue distribution, highly expressed in the normal cerebellum but not in the cerebral cortex.

The protein localises to the endoplasmic reticulum membrane. It carries out the reaction S-ubiquitinyl-[E2 ubiquitin-conjugating enzyme]-L-cysteine + [acceptor protein]-L-lysine = [E2 ubiquitin-conjugating enzyme]-L-cysteine + N(6)-ubiquitinyl-[acceptor protein]-L-lysine.. It functions in the pathway protein modification; protein ubiquitination. Its function is as follows. Acts as an E2-dependent E3 ubiquitin-protein ligase, probably involved in the ER-associated protein degradation pathway. This chain is E3 ubiquitin-protein ligase RNF103 (Rnf103), found in Mus musculus (Mouse).